We begin with the raw amino-acid sequence, 660 residues long: Kinesin-like protein KIF22 (660 aa).

A disordered region spans residues 1-31 (MSLRAKTCPQRREMASATSGPGRCVSKGGLG). A Kinesin motor domain is found at 38–363 (RVRVAVRLRP…LNFTARSKEV (326 aa)). 122–129 (GPTGAGKT) provides a ligand contact to ATP. A disordered region spans residues 391–418 (PSEAKKAKGPEEESTGSPESTAAPASAS). The span at 405–418 (TGSPESTAAPASAS) shows a compositional bias: low complexity. Serine 407, serine 422, and serine 447 each carry phosphoserine. A Glycyl lysine isopeptide (Lys-Gly) (interchain with G-Cter in SUMO2) cross-link involves residue lysine 460. The stretch at 460–505 (KRERMVLMKTVEEKNLEIERLKMKQKELEAKVLAQEAPDPREKENT) forms a coiled coil. 2 disordered regions span residues 493–516 (AQEAPDPREKENTPTILQPPASYS) and 534–567 (IQKQRESSNQIQLLKKGPKRKLEPSPESEAVEKD). Residues 505 to 516 (TPTILQPPASYS) show a composition bias toward polar residues. Residues serine 540 and serine 576 each carry the phosphoserine modification.

This sequence belongs to the TRAFAC class myosin-kinesin ATPase superfamily. Kinesin family. Interacts with FAM83D and SIAH1. Ubiquitinated; mediated by SIAH1 and leading to its subsequent proteasomal degradation.

It localises to the nucleus. The protein localises to the cytoplasm. Its subcellular location is the cytoskeleton. Kinesin family member that is involved in spindle formation and the movements of chromosomes during mitosis and meiosis. Binds to microtubules and to DNA. Plays a role in congression of laterally attached chromosomes in NDC80-depleted cells. This chain is Kinesin-like protein KIF22 (Kif22), found in Mus musculus (Mouse).